The primary structure comprises 120 residues: Large ribosomal subunit protein bL17 (120 aa).

It belongs to the bacterial ribosomal protein bL17 family. As to quaternary structure, part of the 50S ribosomal subunit. Contacts protein L32.

The protein is Large ribosomal subunit protein bL17 of Halalkalibacterium halodurans (strain ATCC BAA-125 / DSM 18197 / FERM 7344 / JCM 9153 / C-125) (Bacillus halodurans).